Consider the following 181-residue polypeptide: MVFMLEDIYERIVRIREEGCRECLKVVCRMDDFQFNQLMSRLDLQIEITSRYSPPVRPALDPMISTELGVYRGDDENIGRLLGYPECCIRSFSENTRYAIDGEHLAEVSELDIPEGKCAIIMPSGFIPCSLRCQEAWERKLIGFADRDEFRRILELEDELMMRLPHFHLAYDEYFEKIVLE.

The protein to M.jannaschii MJ1106.

This is an uncharacterized protein from Methanothermobacter thermautotrophicus (strain ATCC 29096 / DSM 1053 / JCM 10044 / NBRC 100330 / Delta H) (Methanobacterium thermoautotrophicum).